A 309-amino-acid polypeptide reads, in one-letter code: Golgi to ER traffic protein 4 homolog (309 aa).

The disordered stretch occupies residues 290-309 (SGGGLASMEVDGPTIEDEMD).

This sequence belongs to the GET4 family.

In terms of biological role, may play a role in insertion of tail-anchored proteins into the endoplasmic reticulum membrane. This Dictyostelium discoideum (Social amoeba) protein is Golgi to ER traffic protein 4 homolog.